A 593-amino-acid polypeptide reads, in one-letter code: Proteasome-associated ATPase (593 aa).

A coiled-coil region spans residues D5–P94. G281–L286 is a binding site for ATP. Positions G574–L593 are disordered. Polar residues predominate over residues E584–L593. The interval Y592 to L593 is docks into pockets in the proteasome alpha-ring.

This sequence belongs to the AAA ATPase family. As to quaternary structure, homohexamer. Assembles into a hexameric ring structure that caps the 20S proteasome core. Strongly interacts with the prokaryotic ubiquitin-like protein Pup through a hydrophobic interface; the interacting region of ARC lies in its N-terminal coiled-coil domain. There is one Pup binding site per ARC hexamer ring. Upon ATP-binding, the C-terminus of ARC interacts with the alpha-rings of the proteasome core, possibly by binding to the intersubunit pockets.

It participates in protein degradation; proteasomal Pup-dependent pathway. Its function is as follows. ATPase which is responsible for recognizing, binding, unfolding and translocation of pupylated proteins into the bacterial 20S proteasome core particle. May be essential for opening the gate of the 20S proteasome via an interaction with its C-terminus, thereby allowing substrate entry and access to the site of proteolysis. Thus, the C-termini of the proteasomal ATPase may function like a 'key in a lock' to induce gate opening and therefore regulate proteolysis. This is Proteasome-associated ATPase from Salinispora arenicola (strain CNS-205).